Here is a 260-residue protein sequence, read N- to C-terminus: Exosome complex component Rrp42 (260 aa).

Belongs to the RNase PH family. Rrp42 subfamily. In terms of assembly, component of the archaeal exosome complex. Forms a hexameric ring-like arrangement composed of 3 Rrp41-Rrp42 heterodimers. The hexameric ring associates with a trimer of Rrp4 and/or Csl4 subunits.

It is found in the cytoplasm. In terms of biological role, non-catalytic component of the exosome, which is a complex involved in RNA degradation. Contributes to the structuring of the Rrp41 active site. This is Exosome complex component Rrp42 from Thermoplasma volcanium (strain ATCC 51530 / DSM 4299 / JCM 9571 / NBRC 15438 / GSS1).